Here is a 67-residue protein sequence, read N- to C-terminus: UPF0434 protein Lcho_2556 (67 aa).

The protein belongs to the UPF0434 family.

The sequence is that of UPF0434 protein Lcho_2556 from Leptothrix cholodnii (strain ATCC 51168 / LMG 8142 / SP-6) (Leptothrix discophora (strain SP-6)).